The following is a 181-amino-acid chain: ADP-ribosylation factor 1 (181 aa).

Glycine 2 carries N-myristoyl glycine lipidation. GTP-binding positions include leucine 25–threonine 32, threonine 48, glycine 70, asparagine 126–aspartate 129, and alanine 160–threonine 161. Lysine 127 is covalently cross-linked (Glycyl lysine isopeptide (Lys-Gly) (interchain with G-Cter in ubiquitin)).

It belongs to the small GTPase superfamily. Arf family. Interacts with RUD3. Interacts with VPS13 (via C-terminal part); the interaction is direct.

It localises to the golgi apparatus. The catalysed reaction is GTP + H2O = GDP + phosphate + H(+). Functionally, GTP-binding protein involved in Golgi vesicle trafficking. May modulate vesicle budding and uncoating within the Golgi apparatus. May recruit the lipid transfer protein VPS13 to Golgi membranes. Recruits polyadenylate-binding protein PAB1 to COPI vesicles, and this is required for correct localization of the asymmetrically distributed ASH1 mRNA. This is ADP-ribosylation factor 1 (ARF1) from Saccharomyces cerevisiae (strain ATCC 204508 / S288c) (Baker's yeast).